The primary structure comprises 500 residues: Zinc finger and BTB domain-containing protein 34 (500 aa).

The 65-residue stretch at 32 to 96 (CDIIVHIQGQ…CYTGRMSLQL (65 aa)) folds into the BTB domain. Phosphoserine is present on S164. The interval 164–209 (SPPYCSQGRQPTASSDLRMETTPSKALRSRLQEEGHSDRGSSGSVS) is disordered. The segment covering 193–202 (RLQEEGHSDR) has biased composition (basic and acidic residues). Glycyl lysine isopeptide (Lys-Gly) (interchain with G-Cter in SUMO2) cross-links involve residues K235 and K237. Residues 236-245 (VKMEKSDRPS) are compositionally biased toward basic and acidic residues. Disordered regions lie at residues 236–256 (VKME…GDDG) and 341–360 (SDSE…RERS). C2H2-type zinc fingers lie at residues 372-394 (LICI…MRLH) and 400-422 (FVCK…IRGH). K426 participates in a covalent cross-link: Glycyl lysine isopeptide (Lys-Gly) (interchain with G-Cter in SUMO2). Residues 428–451 (FRCEICGKCFPFQGTLNQHLRKNH) form a C2H2-type 3 zinc finger. Phosphoserine is present on S463. Residue K474 forms a Glycyl lysine isopeptide (Lys-Gly) (interchain with G-Cter in SUMO2) linkage. A disordered region spans residues 478–500 (DASASEMGLDSRMEIHTVSDAPD).

As to expression, expressed in several tissues, including heart, brain, thymus, skeletal muscle, small intestine, testis, kidney, placenta, peripheral blood cells and adult and fetal liver.

It is found in the nucleus. May be a transcriptional repressor. This chain is Zinc finger and BTB domain-containing protein 34 (ZBTB34), found in Homo sapiens (Human).